Here is a 542-residue protein sequence, read N- to C-terminus: Excitatory amino acid transporter 1 (542 aa).

The Cytoplasmic segment spans residues 1-47; that stretch reads MTKSNGEEPKMGGRMERFQQGVRKRTLLAKKKVQNITKEDVKSYLFR. A helical transmembrane segment spans residues 48–68; that stretch reads NAFVLLTVTAVIVGTILGFTL. Over 69-86 the chain is Extracellular; the sequence is RPYRMSYREVKYFSFPGE. The helical transmembrane segment at 87-108 threads the bilayer; it reads LLMRMLQMLVLPLIISSLVTGM. Residues 109 to 122 lie on the Cytoplasmic side of the membrane; it reads AALDSKASGKMGMR. A helical transmembrane segment spans residues 123–145; it reads AVVYYMTTTIIAVVIGIIIVIII. Residues 146-236 are Extracellular-facing; sequence HPGKGTKENM…ITEELVPVPG (91 aa). The helical transmembrane segment at 237-260 threads the bilayer; sequence SVNGVNALGLVVFSMCFGFVIGNM. Residues 261–269 are Cytoplasmic-facing; the sequence is KEQGQALRE. A helical membrane pass occupies residues 270–297; it reads FFDSLNEAIMRLVAVIMWYAPVGILFLI. The Extracellular portion of the chain corresponds to 298 to 318; the sequence is AGKIVEMEDMGVIGGQLAMYT. A helical membrane pass occupies residues 319–340; that stretch reads VTVIVGLLIHAVIVLPLLYFLV. The Cytoplasmic portion of the chain corresponds to 341–345; that stretch reads TRKNP. The segment at residues 346 to 376 is an intramembrane region (discontinuously helical); it reads WVFIGGLLQALITALGTSSSSATLPITFKCL. 363-365 is an L-aspartate binding site; the sequence is SSS. At 377 to 385 the chain is on the cytoplasmic side; that stretch reads EENNGVDKR. The chain crosses the membrane as a helical span at residues 386–412; it reads VTRFVLPVGATINMDGTALYEALAAIF. Na(+)-binding residues include Gly394, Thr396, and Asn398. Thr402 contributes to the L-aspartate binding site. Topologically, residues 413 to 425 are extracellular; it reads IAQVNNFELNFGQ. Positions 426 to 459 form an intramembrane region, discontinuously helical; the sequence is IITISITATAASIGAAGIPQAGLVTMVIVLTSVG. An L-aspartate-binding site is contributed by 443–447; it reads IPQAG. The Extracellular segment spans residues 460–472; that stretch reads LPTDDITLIIAVD. The chain crosses the membrane as a helical span at residues 473 to 494; it reads WFLDRLRTTTNVLGDSLGAGIV. Residues Asp476 and Asn483 each coordinate L-aspartate. The Na(+) site is built by Asn483 and Asp487. Residues 495–542 lie on the Cytoplasmic side of the membrane; the sequence is EHLSRHELKNRDVEMGNSVIEENEMKKPYQLIAQDNETEKPIDSETKM. Ser512 carries the post-translational modification Phosphoserine.

This sequence belongs to the dicarboxylate/amino acid:cation symporter (DAACS) (TC 2.A.23) family. SLC1A3 subfamily. As to quaternary structure, homotrimer. Glycosylated. Detected in brain. Detected at very much lower levels in heart, lung, placenta and skeletal muscle. Highly expressed in cerebellum, but also found in frontal cortex, hippocampus and basal ganglia.

The protein localises to the cell membrane. It catalyses the reaction K(+)(in) + L-glutamate(out) + 3 Na(+)(out) + H(+)(out) = K(+)(out) + L-glutamate(in) + 3 Na(+)(in) + H(+)(in). The catalysed reaction is K(+)(in) + L-aspartate(out) + 3 Na(+)(out) + H(+)(out) = K(+)(out) + L-aspartate(in) + 3 Na(+)(in) + H(+)(in). It carries out the reaction D-aspartate(out) + K(+)(in) + 3 Na(+)(out) + H(+)(out) = D-aspartate(in) + K(+)(out) + 3 Na(+)(in) + H(+)(in). Functionally, sodium-dependent, high-affinity amino acid transporter that mediates the uptake of L-glutamate and also L-aspartate and D-aspartate. Functions as a symporter that transports one amino acid molecule together with two or three Na(+) ions and one proton, in parallel with the counter-transport of one K(+) ion. Mediates Cl(-) flux that is not coupled to amino acid transport; this avoids the accumulation of negative charges due to aspartate and Na(+) symport. Plays a redundant role in the rapid removal of released glutamate from the synaptic cleft, which is essential for terminating the postsynaptic action of glutamate. The polypeptide is Excitatory amino acid transporter 1 (Homo sapiens (Human)).